The primary structure comprises 96 residues: GTPase HRas (96 aa).

N-acetylmethionine is present on Met-1. At Thr-2 the chain carries N-acetylthreonine; in GTPase HRas, N-terminally processed. Position 10–17 (10–17) interacts with GTP; sequence GAGGVGKS. The Effector region signature appears at 32 to 40; that stretch reads YDPTIEDSY. 57–61 serves as a coordination point for GTP; that stretch reads DTAGQ.

It belongs to the small GTPase superfamily. Ras family. In terms of assembly, in its GTP-bound form interacts with PLCE1. Interacts with TBC1D10C. Interacts with RGL3. Interacts with HSPD1. Found in a complex with at least BRAF, HRAS, MAP2K1, MAPK3 and RGS14. Interacts (active GTP-bound form) with RGS14 (via RBD 1 domain). Forms a signaling complex with RASGRP1 and DGKZ. Interacts with RASSF5. Interacts with PDE6D. Interacts with IKZF3. Interacts with RACK1. Interacts with PIK3CG; the interaction is required for membrane recruitment and beta-gamma G protein dimer-dependent activation of the PI3K gamma complex PIK3CG:PIK3R6. Interacts with RAPGEF2. Interacts (active GTP-bound form) with both SHOC2 and PP1c (all isoforms) to form a tertiary complex; SHOC2 and PP1c preferably bind M-Ras/MRAS, but they also bind K-Ras/KRAS, N-Ras/NRAS and H-Ras/HRAS. Interacts (in GTP-bound form) with Oog1. Interacts (GTP-bound form) with MAPKAP1/SIN1; inhibiting H-Ras/HRAS activity. Post-translationally, ubiquitinated by the BCR(LZTR1) E3 ubiquitin ligase complex at Lys-170 in a non-degradative manner, leading to inhibit Ras signaling by decreasing Ras association with membranes.

It is found in the cell membrane. Its subcellular location is the golgi apparatus. The protein resides in the golgi apparatus membrane. It catalyses the reaction GTP + H2O = GDP + phosphate + H(+). Its activity is regulated as follows. Alternates between an inactive form bound to GDP and an active form bound to GTP. Activated by a guanine nucleotide-exchange factor (GEF) and inactivated by a GTPase-activating protein (GAP). Functionally, ras proteins bind GDP/GTP and possess intrinsic GTPase activity. This is GTPase HRas (HRAS) from Mesocricetus auratus (Golden hamster).